Consider the following 351-residue polypeptide: D-threonate 4-phosphate dehydrogenase (351 aa).

Substrate is bound by residues histidine 147 and threonine 148. A divalent metal cation contacts are provided by histidine 177, histidine 221, and histidine 276. Positions 284, 293, and 302 each coordinate substrate.

The protein belongs to the PdxA family. PdxA2 subfamily. As to quaternary structure, homodimer. The cofactor is a divalent metal cation.

The enzyme catalyses 4-O-phospho-D-threonate + NAD(+) = dihydroxyacetone phosphate + CO2 + NADH. Its function is as follows. Catalyzes the NAD-dependent oxidation and subsequent decarboxylation of D-threonate 4-phosphate to produce dihydroxyacetone phosphate (DHAP). Can also use 4-hydroxy-L-threonine 4-phosphate as substrate. This chain is D-threonate 4-phosphate dehydrogenase, found in Bordetella bronchiseptica (strain ATCC BAA-588 / NCTC 13252 / RB50) (Alcaligenes bronchisepticus).